Here is a 215-residue protein sequence, read N- to C-terminus: Ras-related protein Rab-5A (215 aa).

Residues Ser-29, Ala-30, Gly-32, Lys-33, Ser-34, Ser-35, His-46, Glu-47, Thr-52, and Gly-78 each coordinate GTP. Ser-34 serves as a coordination point for Mg(2+). 2 consecutive short sequence motifs (switch) follow at residues 44 to 56 and 77 to 93; these read QFHE…IGAA and AGQE…YRGA. Thr-52 contacts Mg(2+). Ser-84 carries the phosphoserine modification. GTP-binding residues include Asn-133, Lys-134, Asp-136, Ala-164, and Lys-165. The disordered stretch occupies residues 181–215; that stretch reads LPKNEPQNPGANSARGRGVDLTEPAQPARSQCCSN. S-geranylgeranyl cysteine attachment occurs at residues Cys-212 and Cys-213.

The protein belongs to the small GTPase superfamily. Rab family. As to quaternary structure, interacts with GDI1; this promotes dissociation from membranes; phosphorylation at Ser-84 disrupts this interaction. Interacts with GDI2; phosphorylation at Ser-84 disrupts the interaction. Interacts with EEA1. Interacts with RIN1 and GAPVD1, which regulate its pathway, probably by acting as a GEF. Interacts with ALS2CL, SUN2, ZFYVE20 and RUFY1. Interacts with RABEP1; one RABEP1 homodimer binds two RAB5A chains, but at opposite sides of the dimer. Interacts with SGSM1, SGSM3 and PIK3CB. Interacts with RINL. May be a component of a complex composed of RAB5A, DYN2 and PIK3C3. Does not interact with the BLOC-3 complex (heterodimer of HPS1 and HPS4). Interacts with CLN5. Interacts with APPL2. Interacts with F8A1/F8A2/F8A3. Found in a complex with F8A1/F8A2/F8A3, HTT and RAB5A; mediates the recruitment of HTT by RAB5A onto early endosomes. Interacts with ATP9A. Interacts with PPP1R21; mediates the recruitment of FERRY complex by RAB5A onto early endosomes. The cofactor is Mg(2+). In terms of processing, phosphorylation of Ser-84 in the switch II region by LRRK2 prevents the association of RAB regulatory proteins, including RAB GDP dissociation inhibitors GDI1 and GDI2.

Its subcellular location is the cell membrane. The protein resides in the early endosome membrane. The protein localises to the melanosome. It is found in the cytoplasmic vesicle. It localises to the cell projection. Its subcellular location is the ruffle. The protein resides in the membrane. The protein localises to the cytoplasm. It is found in the cytosol. It localises to the phagosome membrane. Its subcellular location is the endosome membrane. It catalyses the reaction GTP + H2O = GDP + phosphate + H(+). With respect to regulation, regulated by guanine nucleotide exchange factors (GEFs) including RINL, which promote the exchange of bound GDP for free GTP. Regulated by GTPase activating proteins (GAPs) which increase the GTP hydrolysis activity. Inhibited by GDP dissociation inhibitors (GDIs). The small GTPases Rab are key regulators of intracellular membrane trafficking, from the formation of transport vesicles to their fusion with membranes. Rabs cycle between an inactive GDP-bound form and an active GTP-bound form that is able to recruit to membranes different sets of downstream effectors directly responsible for vesicle formation, movement, tethering and fusion. RAB5A is required for the fusion of plasma membranes and early endosomes. Contributes to the regulation of filopodia extension. Required for the exosomal release of SDCBP, CD63, PDCD6IP and syndecan. Regulates maturation of apoptotic cell-containing phagosomes, probably downstream of DYN2 and PIK3C3. This Rattus norvegicus (Rat) protein is Ras-related protein Rab-5A.